Consider the following 336-residue polypeptide: Heme A synthase (336 aa).

The next 5 membrane-spanning stretches (helical) occupy residues 5–25 (LTRW…VGGI), 92–112 (GRAT…KGII), 117–137 (ILSY…GWYM), 153–173 (LAFH…KLVK), and 191–211 (LIFS…GALV). A heme-binding site is contributed by histidine 255. A run of 3 helical transmembrane segments spans residues 257–277 (LGAY…LKVK), 284–304 (VAFY…ITLL), and 307–327 (VPII…SVVI). Position 315 (histidine 315) interacts with heme.

Belongs to the COX15/CtaA family. Type 2 subfamily. Interacts with CtaB. Heme b serves as cofactor.

It is found in the cell membrane. It catalyses the reaction Fe(II)-heme o + 2 A + H2O = Fe(II)-heme a + 2 AH2. It participates in porphyrin-containing compound metabolism; heme A biosynthesis; heme A from heme O: step 1/1. Functionally, catalyzes the conversion of heme O to heme A by two successive hydroxylations of the methyl group at C8. The first hydroxylation forms heme I, the second hydroxylation results in an unstable dihydroxymethyl group, which spontaneously dehydrates, resulting in the formyl group of heme A. This is Heme A synthase from Rickettsia bellii (strain OSU 85-389).